Reading from the N-terminus, the 417-residue chain is Chaperone SurA (417 aa).

An N-terminal signal peptide occupies residues 1-12 (MGAALLCSFAHA). 2 PpiC domains span residues 163 to 264 (SEEY…KLEE) and 273 to 372 (RDEV…QVLG).

The protein localises to the periplasm. It carries out the reaction [protein]-peptidylproline (omega=180) = [protein]-peptidylproline (omega=0). In terms of biological role, chaperone involved in the correct folding and assembly of outer membrane proteins. Recognizes specific patterns of aromatic residues and the orientation of their side chains, which are found more frequently in integral outer membrane proteins. May act in both early periplasmic and late outer membrane-associated steps of protein maturation. This chain is Chaperone SurA, found in Pseudomonas aeruginosa (strain ATCC 15692 / DSM 22644 / CIP 104116 / JCM 14847 / LMG 12228 / 1C / PRS 101 / PAO1).